A 71-amino-acid polypeptide reads, in one-letter code: Gas vesicle protein A (71 aa).

Residues 12–22 form an alpha helix 1 region; sequence LAEVIDRILDK. A beta-strand 1 region spans residues 26-34; it reads IDAWARVSL. Positions 35-37 are beta turn; sequence VGI. The segment at 38–46 is beta-strand 2; sequence ELLAIEARV. The alpha helix 2 stretch occupies residues 51–70; that stretch reads VETYLKYAEAVGLTQXAXXA.

The protein belongs to the gas vesicle GvpA family. As to quaternary structure, the gas vesicle shell is 2 nm thick and consists of a single layer of this protein. It forms helical ribs nearly perpendicular to the long axis of the vesicle.

It localises to the gas vesicle shell. Gas vesicles are hollow, gas filled proteinaceous nanostructures found in some microorganisms. During planktonic growth they allow positioning of the organism at a favorable depth for light or nutrient acquisition. GvpA forms the protein shell. The protein is Gas vesicle protein A of Microcystis sp. (strain BC 84/1).